The sequence spans 190 residues: Inosine triphosphate pyrophosphatase (190 aa).

9–14 (TGNAKK) is an ITP binding site. E39 provides a ligand contact to Mg(2+). Residues K51, 67-68 (DT), K84, 144-147 (FGWD), K167, and 172-173 (HR) each bind ITP.

This sequence belongs to the HAM1 NTPase family. In terms of assembly, homodimer. It depends on Mg(2+) as a cofactor. Mn(2+) serves as cofactor.

The protein localises to the cytoplasm. The catalysed reaction is ITP + H2O = IMP + diphosphate + H(+). It carries out the reaction dITP + H2O = dIMP + diphosphate + H(+). The enzyme catalyses XTP + H2O = XMP + diphosphate + H(+). In terms of biological role, pyrophosphatase that hydrolyzes non-canonical purine nucleotides such as inosine triphosphate (ITP), deoxyinosine triphosphate (dITP) or xanthosine 5'-triphosphate (XTP) to their respective monophosphate derivatives. The enzyme does not distinguish between the deoxy- and ribose forms. Probably excludes non-canonical purines from RNA and DNA precursor pools, thus preventing their incorporation into RNA and DNA and avoiding chromosomal lesions. The sequence is that of Inosine triphosphate pyrophosphatase from Pediculus humanus subsp. corporis (Body louse).